The chain runs to 152 residues: Superoxide dismutase [Cu-Zn] 5 (152 aa).

3 residues coordinate Cu cation: His44, His46, and His61. Cys55 and Cys144 form a disulfide bridge. The Zn(2+) site is built by His61, His69, His78, and Asp81. His118 lines the Cu cation pocket.

It belongs to the Cu-Zn superoxide dismutase family. Cu cation is required as a cofactor. Requires Zn(2+) as cofactor.

It catalyses the reaction 2 superoxide + 2 H(+) = H2O2 + O2. Destroys radicals which are normally produced within the cells and which are toxic to biological systems. The protein is Superoxide dismutase [Cu-Zn] 5 (sodE) of Dictyostelium discoideum (Social amoeba).